A 295-amino-acid chain; its full sequence is 4-diphosphocytidyl-2-C-methyl-D-erythritol kinase (295 aa).

The active site involves K15. Residue 102–112 participates in ATP binding; sequence PIASGVGGGSS. D144 is an active-site residue.

The protein belongs to the GHMP kinase family. IspE subfamily.

It carries out the reaction 4-CDP-2-C-methyl-D-erythritol + ATP = 4-CDP-2-C-methyl-D-erythritol 2-phosphate + ADP + H(+). Its pathway is isoprenoid biosynthesis; isopentenyl diphosphate biosynthesis via DXP pathway; isopentenyl diphosphate from 1-deoxy-D-xylulose 5-phosphate: step 3/6. Its function is as follows. Catalyzes the phosphorylation of the position 2 hydroxy group of 4-diphosphocytidyl-2C-methyl-D-erythritol. The protein is 4-diphosphocytidyl-2-C-methyl-D-erythritol kinase of Mesorhizobium japonicum (strain LMG 29417 / CECT 9101 / MAFF 303099) (Mesorhizobium loti (strain MAFF 303099)).